The primary structure comprises 871 residues: Envelope glycoprotein gp160 (871 aa).

The signal sequence occupies residues 1 to 21; that stretch reads MKNLIGITLILIITILGIGFS. The Extracellular segment spans residues 22–684; it reads TYYTTVFYGV…DITQWLWYIK (663 aa). Residues Cys-43 and Cys-63 are joined by a disulfide bond. Residues Asn-77, Asn-124, Asn-127, Asn-142, Asn-153, Asn-157, Asn-185, Asn-194, Asn-229, Asn-238, Asn-259, Asn-273, Asn-285, Asn-289, Asn-297, Asn-329, Asn-345, Asn-352, Asn-384, Asn-387, Asn-395, Asn-398, Asn-438, Asn-451, and Asn-496 are each glycosylated (N-linked (GlcNAc...) asparagine; by host). 5 cysteine pairs are disulfide-bonded: Cys-108–Cys-202, Cys-115–Cys-193, Cys-120–Cys-154, Cys-215–Cys-244, and Cys-225–Cys-236. The segment at 120 to 153 is V1; the sequence is CTMTNTTNKTLNSATTTLTPTVNLSSIPNYEVYN. The tract at residues 154-193 is V2; sequence CSFNQTTEFRDKKKQIYSLFYREDIVKEDGNNNSYYLHNC. The tract at residues 292–325 is V3; that stretch reads CERTGNNTRGQVQIGPGMTFYNIENVVGDTRKAY. Cys-292 and Cys-326 are disulfide-bonded. Disulfide bonds link Cys-376/Cys-435 and Cys-383/Cys-408. The segment at 383–408 is V4; sequence CNLTNWTNTWTANRTNNTHGTLVAPC. Residues 451–458 are V5; the sequence is NNSYTPQF. The segment at 502-522 is fusion peptide; that stretch reads RDVGIGLLFLGFLSAAGSTMG. The tract at residues 567–583 is immunosuppression; that stretch reads LQARMLAVEKYIRDQQL. Asn-602, Asn-613, Asn-626, and Asn-638 each carry an N-linked (GlcNAc...) asparagine; by host glycan. Residues 645–668 adopt a coiled-coil conformation; sequence SLLEKAQTQQEKNKQELLELDKWS. Residues 663–684 are MPER; binding to GalCer; the sequence is ELDKWSSLWDWFDITQWLWYIK. A helical membrane pass occupies residues 685-705; that stretch reads IAIIIVAGLVGLRILMFIVNV. Residues 706–871 are Cytoplasmic-facing; that stretch reads VKQVRQGYTP…IRQGLELALN (166 aa). Residues 713–716 carry the YXXL motif; contains endocytosis signal motif; that stretch reads YTPL.

As to quaternary structure, the mature envelope protein (Env) consists of a homotrimer of non-covalently associated gp120-gp41 heterodimers. The resulting complex protrudes from the virus surface as a spike. Interacts with host CD4 and CCR5. Gp120 also interacts with the C-type lectins CD209/DC-SIGN and CLEC4M/DC-SIGNR (collectively referred to as DC-SIGN(R)). The mature envelope protein (Env) consists of a homotrimer of non-covalently associated gp120-gp41 heterodimers. The resulting complex protrudes from the virus surface as a spike. In terms of processing, specific enzymatic cleavages in vivo yield mature proteins. Envelope glycoproteins are synthesized as an inactive precursor that is heavily N-glycosylated and processed likely by host cell furin in the Golgi to yield the mature SU and TM proteins. The cleavage site between SU and TM requires the minimal sequence [KR]-X-[KR]-R.

The protein resides in the virion membrane. It is found in the host cell membrane. The protein localises to the host endosome membrane. Its function is as follows. The surface protein gp120 (SU) attaches the virus to the host lymphoid cell by binding to the primary receptor CD4. This interaction induces a structural rearrangement creating a high affinity binding site for a chemokine coreceptor like CCR5. This peculiar 2 stage receptor-interaction strategy allows gp120 to maintain the highly conserved coreceptor-binding site in a cryptic conformation, protected from neutralizing antibodies. These changes are transmitted to the transmembrane protein gp41 and are thought to activate its fusogenic potential by unmasking its fusion peptide. In terms of biological role, surface protein gp120 (SU) may target the virus to gut-associated lymphoid tissue (GALT) by binding host ITGA4/ITGB7 (alpha-4/beta-7 integrins), a complex that mediates T-cell migration to the GALT. Interaction between gp120 and ITGA4/ITGB7 would allow the virus to enter GALT early in the infection, infecting and killing most of GALT's resting CD4+ T-cells. This T-cell depletion is believed to be the major insult to the host immune system leading to AIDS. The surface protein gp120 is a ligand for CD209/DC-SIGN and CLEC4M/DC-SIGNR, which are respectively found on dendritic cells (DCs), and on endothelial cells of liver sinusoids and lymph node sinuses. These interactions allow capture of viral particles at mucosal surfaces by these cells and subsequent transmission to permissive cells. DCs are professional antigen presenting cells, critical for host immunity by inducing specific immune responses against a broad variety of pathogens. They act as sentinels in various tissues where they take up antigen, process it, and present it to T-cells following migration to lymphoid organs. SIV subverts the migration properties of dendritic cells to gain access to CD4+ T-cells in lymph nodes. Virus transmission to permissive T-cells occurs either in trans (without DCs infection, through viral capture and transmission), or in cis (following DCs productive infection, through the usual CD4-gp120 interaction), thereby inducing a robust infection. In trans infection, bound virions remain infectious over days and it is proposed that they are not degraded, but protected in non-lysosomal acidic organelles within the DCs close to the cell membrane thus contributing to the viral infectious potential during DCs' migration from the periphery to the lymphoid tissues. On arrival at lymphoid tissues, intact virions recycle back to DCs' cell surface allowing virus transmission to CD4+ T-cells. Virion capture also seems to lead to MHC-II-restricted viral antigen presentation, and probably to the activation of SIV-specific CD4+ cells. Functionally, the transmembrane protein gp41 (TM) acts as a class I viral fusion protein. Under the current model, the protein has at least 3 conformational states: pre-fusion native state, pre-hairpin intermediate state, and post-fusion hairpin state. During fusion of viral and target intracellular membranes, the coiled coil regions (heptad repeats) assume a trimer-of-hairpins structure, positioning the fusion peptide in close proximity to the C-terminal region of the ectodomain. The formation of this structure appears to drive apposition and subsequent fusion of viral and target cell membranes. Complete fusion occurs in host cell endosomes. The virus undergoes clathrin-dependent internalization long before endosomal fusion, thus minimizing the surface exposure of conserved viral epitopes during fusion and reducing the efficacy of inhibitors targeting these epitopes. Membranes fusion leads to delivery of the nucleocapsid into the cytoplasm. Its function is as follows. The envelope glycoprotein gp160 precursor down-modulates cell surface CD4 antigen by interacting with it in the endoplasmic reticulum and blocking its transport to the cell surface. In terms of biological role, the gp120-gp41 heterodimer allows rapid transcytosis of the virus through CD4 negative cells such as simple epithelial monolayers of the intestinal, rectal and endocervical epithelial barriers. Both gp120 and gp41 specifically recognize glycosphingolipids galactosyl-ceramide (GalCer) or 3' sulfo-galactosyl-ceramide (GalS) present in the lipid rafts structures of epithelial cells. Binding to these alternative receptors allows the rapid transcytosis of the virus through the epithelial cells. This transcytotic vesicle-mediated transport of virions from the apical side to the basolateral side of the epithelial cells does not involve infection of the cells themselves. This is Envelope glycoprotein gp160 from Simian immunodeficiency virus (isolate TAN1) (SIV-cpz).